The chain runs to 426 residues: Serine protease HTRA2, mitochondrial (426 aa).

The transit peptide at 1–30 (MALRGSHRLDDFIRRCSALTLFHSQAPSRR) directs the protein to the mitochondrion. Positions 30–59 (RVSHCGRDRRQQQDPPGQGRQEQQESGGGH) are disordered. The propeptide occupies 31-78 (VSHCGRDRRQQQDPPGQGRQEQQESGGGHWSRFGWRSLIRFFVPFSLG). The span at 42–54 (QDPPGQGRQEQQE) shows a compositional bias: low complexity. Residues 68 to 86 (LIRFFVPFSLGAVASSLVI) traverse the membrane as a helical segment. The IAP-binding motif lies at 79 to 82 (AVAS). The serine protease stretch occupies residues 143–306 (SNGSGFIIEQ…IPIDYVKVFL (164 aa)). Active-site charge relay system residues include H161, D193, and S270. The PDZ domain occupies 329–414 (MGITMLTLTP…HLDIVILRGV (86 aa)).

This sequence belongs to the peptidase S1C family. Interacts with th/DIAP1 (via BIR 2 domain).

Its subcellular location is the mitochondrion intermembrane space. The protein localises to the mitochondrion membrane. The catalysed reaction is Cleavage of non-polar aliphatic amino-acids at the P1 position, with a preference for Val, Ile and Met. At the P2 and P3 positions, Arg is selected most strongly with a secondary preference for other hydrophilic residues.. Functionally, serine protease that shows proteolytic activity against a non-specific substrate beta-casein. Promotes or induces cell death either by direct binding to and inhibition of BIRC proteins (also called inhibitor of apoptosis proteins, IAPs), leading to an increase in caspase activity, or by a BIRC inhibition-independent, caspase-independent and serine protease activity-dependent mechanism. Can antagonize antiapoptotic activity of th/Diap1 by directly inducing the degradation of th/Diap1. The sequence is that of Serine protease HTRA2, mitochondrial from Drosophila ananassae (Fruit fly).